The following is a 235-amino-acid chain: Eukaryotic translation initiation factor 4E-1 (235 aa).

The span at 1 to 16 shows a compositional bias: basic and acidic residues; the sequence is MAVEDTPKSVVTEEAK. Residues 1-59 form a disordered region; the sequence is MAVEDTPKSVVTEEAKPNSIENPIDRYHEEGDDAEEGEIAGGEGDGNVDESSKSGVPES. EIF4G-binding stretches follow at residues 60–63 and 70–106; these read HPLE and FDNPAVKSKQTSWGSSLRPVFTFSTVEEFWSLYNNMK. MRNA-binding positions include 78-83, lysine 110, and 128-129; these read KQTSWG and WE. A disulfide bridge links cysteine 133 with cysteine 171. The segment at 154 to 163 is EIF4G-binding; that stretch reads YTLLALIGEQ. MRNA-binding positions include 178 to 183 and 223 to 227; these read RGKQER and KKLDR.

Belongs to the eukaryotic initiation factor 4E family. In terms of assembly, EIF4F is a multi-subunit complex, the composition of which varies with external and internal environmental conditions. It is composed of at least EIF4A, EIF4E and EIF4G. EIF4E is also known to interact with other partners. In higher plants two isoforms of EIF4F have been identified, named isoform EIF4F and isoform EIF(iso)4F. Isoform EIF4F has subunits p220 and p26, whereas isoform EIF(iso)4F has subunits p82 and p28. Interacts directly with EXA1. (Microbial infection) Interacts with viral genome-linked protein (VPg); this interaction is possible in susceptible hosts but impaired in resistant plants. Post-translationally, according to the redox status, the Cys-133-Cys-171 disulfide bridge may have a role in regulating protein function by affecting its ability to bind capped mRNA. Expressed in all tissues except in the cells of the specialization zone of the roots.

Its subcellular location is the nucleus. It localises to the cytoplasm. Functionally, component of the protein complex eIF4F, which is involved in the recognition of the mRNA cap, ATP-dependent unwinding of 5'-terminal secondary structure and recruitment of mRNA to the ribosome. Recognizes and binds the 7-methylguanosine-containing mRNA cap during an early step in the initiation of protein synthesis and facilitates ribosome binding by inducing the unwinding of the mRNAs secondary structures. Key component of recessive resistance to potyviruses. Its function is as follows. (Microbial infection) Susceptibility host factor required for viral infection by recruiting viral RNAs to the host ribosomal complex via an interaction with viral genome-linked protein (VPg). This Arabidopsis thaliana (Mouse-ear cress) protein is Eukaryotic translation initiation factor 4E-1.